A 367-amino-acid chain; its full sequence is 3-dehydroquinate synthase (367 aa).

NAD(+) contacts are provided by residues 69-74 (DGEAFK), 103-107 (GVIGD), 127-128 (TT), Lys-140, and Lys-149. Zn(2+) is bound by residues Glu-182, His-245, and His-262.

This sequence belongs to the sugar phosphate cyclases superfamily. Dehydroquinate synthase family. It depends on Co(2+) as a cofactor. Zn(2+) is required as a cofactor. Requires NAD(+) as cofactor.

It localises to the cytoplasm. The enzyme catalyses 7-phospho-2-dehydro-3-deoxy-D-arabino-heptonate = 3-dehydroquinate + phosphate. It functions in the pathway metabolic intermediate biosynthesis; chorismate biosynthesis; chorismate from D-erythrose 4-phosphate and phosphoenolpyruvate: step 2/7. Functionally, catalyzes the conversion of 3-deoxy-D-arabino-heptulosonate 7-phosphate (DAHP) to dehydroquinate (DHQ). This Pseudomonas syringae pv. syringae (strain B728a) protein is 3-dehydroquinate synthase.